The chain runs to 338 residues: Fructose-1,6-bisphosphatase class 1 (338 aa).

4 residues coordinate Mg(2+): E94, D116, L118, and D119. Residues 119 to 122 (DGSS), N210, and K276 each bind substrate. A Mg(2+)-binding site is contributed by E282.

Belongs to the FBPase class 1 family. Homotetramer. The cofactor is Mg(2+).

The protein resides in the cytoplasm. The enzyme catalyses beta-D-fructose 1,6-bisphosphate + H2O = beta-D-fructose 6-phosphate + phosphate. It participates in carbohydrate biosynthesis; gluconeogenesis. This chain is Fructose-1,6-bisphosphatase class 1, found in Burkholderia mallei (strain NCTC 10247).